Reading from the N-terminus, the 221-residue chain is Cytidylate kinase 1 (221 aa).

ATP is bound at residue 7–15; it reads GPSASGKSS.

It belongs to the cytidylate kinase family. Type 1 subfamily.

It is found in the cytoplasm. It catalyses the reaction CMP + ATP = CDP + ADP. It carries out the reaction dCMP + ATP = dCDP + ADP. The protein is Cytidylate kinase 1 of Borreliella burgdorferi (strain ATCC 35210 / DSM 4680 / CIP 102532 / B31) (Borrelia burgdorferi).